We begin with the raw amino-acid sequence, 209 residues long: Kynurenine formamidase (209 aa).

Tryptophan 20 lines the substrate pocket. Zn(2+)-binding residues include histidine 50, histidine 54, and aspartate 56. The active-site Proton donor/acceptor is histidine 60. Histidine 161 and glutamate 173 together coordinate Zn(2+).

The protein belongs to the Cyclase 1 superfamily. KynB family. As to quaternary structure, homodimer. Zn(2+) serves as cofactor.

The catalysed reaction is N-formyl-L-kynurenine + H2O = L-kynurenine + formate + H(+). Its pathway is amino-acid degradation; L-tryptophan degradation via kynurenine pathway; L-kynurenine from L-tryptophan: step 2/2. Its function is as follows. Catalyzes the hydrolysis of N-formyl-L-kynurenine to L-kynurenine, the second step in the kynurenine pathway of tryptophan degradation. The chain is Kynurenine formamidase from Bacillus mycoides (strain KBAB4) (Bacillus weihenstephanensis).